Reading from the N-terminus, the 365-residue chain is WAT1-related protein At1g01070 (365 aa).

The next 10 membrane-spanning stretches (helical) occupy residues 14–34 (YSPVIVMVMSNVAMGSVNALV), 46–66 (VIGAYRMAISALILVPFAYVL), 83–103 (FVSGLLGASLMQFFFLLGLSY), 107–127 (TVSCALVSMLPAITFALALIF), 139–159 (AGMLKVIGTLICISGALFLTF), 189–209 (WLLGCLYLTIGTVLLSLWMLF), 221–241 (YSSTCLMSIFAAFQCALLSLY), 255–275 (FVITVIIYAGVVGQAMTTVAT), 285–305 (VFASAFFPLTLISATLFDFLI), and 310–330 (LYLGSVIGSLVTITGLYMFLW). The region spanning 27-157 (MGSVNALVKK…LICISGALFL (131 aa)) is the EamA 1 domain. Residues 223–329 (STCLMSIFAA…VTITGLYMFL (107 aa)) enclose the EamA 2 domain. The segment covering 340–356 (TALSSGMDNEAQYTTPN) has biased composition (polar residues). Residues 340 to 365 (TALSSGMDNEAQYTTPNKDNDSKSPV) are disordered.

This sequence belongs to the drug/metabolite transporter (DMT) superfamily. Plant drug/metabolite exporter (P-DME) (TC 2.A.7.4) family.

It localises to the membrane. In Arabidopsis thaliana (Mouse-ear cress), this protein is WAT1-related protein At1g01070.